Consider the following 156-residue polypeptide: Small ribosomal subunit protein uS7 (156 aa).

This sequence belongs to the universal ribosomal protein uS7 family. As to quaternary structure, part of the 30S ribosomal subunit. Contacts proteins S9 and S11.

Its function is as follows. One of the primary rRNA binding proteins, it binds directly to 16S rRNA where it nucleates assembly of the head domain of the 30S subunit. Is located at the subunit interface close to the decoding center, probably blocks exit of the E-site tRNA. This Mycobacterium leprae (strain Br4923) protein is Small ribosomal subunit protein uS7.